Consider the following 346-residue polypeptide: Biotin synthase (346 aa).

The region spanning tyrosine 36 to arginine 265 is the Radical SAM core domain. Cysteine 54, cysteine 58, and cysteine 61 together coordinate [4Fe-4S] cluster. [2Fe-2S] cluster is bound by residues cysteine 98, cysteine 130, cysteine 190, and arginine 260.

Belongs to the radical SAM superfamily. Biotin synthase family. As to quaternary structure, homodimer. It depends on [4Fe-4S] cluster as a cofactor. [2Fe-2S] cluster serves as cofactor.

The enzyme catalyses (4R,5S)-dethiobiotin + (sulfur carrier)-SH + 2 reduced [2Fe-2S]-[ferredoxin] + 2 S-adenosyl-L-methionine = (sulfur carrier)-H + biotin + 2 5'-deoxyadenosine + 2 L-methionine + 2 oxidized [2Fe-2S]-[ferredoxin]. Its pathway is cofactor biosynthesis; biotin biosynthesis; biotin from 7,8-diaminononanoate: step 2/2. Its function is as follows. Catalyzes the conversion of dethiobiotin (DTB) to biotin by the insertion of a sulfur atom into dethiobiotin via a radical-based mechanism. In Acaryochloris marina (strain MBIC 11017), this protein is Biotin synthase.